Here is a 152-residue protein sequence, read N- to C-terminus: Large-conductance mechanosensitive channel (152 aa).

3 helical membrane-spanning segments follow: residues Ile21–Val41, Val44–Leu64, and Gly92–Val112.

This sequence belongs to the MscL family. As to quaternary structure, homopentamer.

The protein resides in the cell inner membrane. Its function is as follows. Channel that opens in response to stretch forces in the membrane lipid bilayer. May participate in the regulation of osmotic pressure changes within the cell. This is Large-conductance mechanosensitive channel from Bordetella bronchiseptica (strain ATCC BAA-588 / NCTC 13252 / RB50) (Alcaligenes bronchisepticus).